A 671-amino-acid polypeptide reads, in one-letter code: DNA polymerase kappa (671 aa).

The 181-residue stretch at 105–285 folds into the UmuC domain; that stretch reads WLHVDMDAFY…LPVRKIGGIG (181 aa). Mg(2+) contacts are provided by aspartate 109 and aspartate 200. Residue glutamate 201 is part of the active site. Residues 576–613 form a UBZ3-type zinc finger; that stretch reads YWIDGYKCVLCGIELPPSFVEERQEHSDFHLAQRLQNE. Cysteine 583, cysteine 586, histidine 601, and histidine 605 together coordinate Zn(2+). A disordered region spans residues 607–671; that stretch reads AQRLQNEETG…NQNSNETQRK (65 aa). The Nuclear localization signal motif lies at 625 to 632; it reads KRRILGKE. The span at 629–650 shows a compositional bias: basic and acidic residues; that stretch reads LGKEKVNSKPKKQKPDQKDSSK. Positions 659-671 are enriched in polar residues; the sequence is TKSNQNSNETQRK.

This sequence belongs to the DNA polymerase type-Y family. The cofactor is Mg(2+). As to expression, expressed in roots, leaves, stems, flowers and siliques. Present in endoreduplicating cells.

The protein resides in the nucleus. The enzyme catalyses DNA(n) + a 2'-deoxyribonucleoside 5'-triphosphate = DNA(n+1) + diphosphate. With respect to regulation, unable to bypass a single 1,N(6)-ethenoadenine (epsilon-dA) or an abasic site lesions in DNA templates. Template-directed low-fidelity DNA polymerase specifically involved in DNA repair. Able to extend primer-terminal mispairs, and to insert nucleotides opposite to a single 7,8-dihydro-8-oxoGuanine (8-oxoG) lesion and moderately extend from the resulting primer end, thus leading to both error-free and error-prone bypass of 8-oxoG DNA lesions. Probably involved in consecutive DNA replication cycles in the absence of mitosis. Binds preferentially template-primer DNA substrates or single-stranded DNA. Plays an important role in translesion synthesis, where the normal high-fidelity DNA polymerases cannot proceed and DNA synthesis stalls. Depending on the context, it inserts the correct base, but causes frequent base transitions, transversions and frameshifts. The sequence is that of DNA polymerase kappa from Arabidopsis thaliana (Mouse-ear cress).